Reading from the N-terminus, the 276-residue chain is Caspase-6 (276 aa).

Positions 1–5 (MTETD) are excised as a propeptide. A tri-arginine exosite region spans residues 25 to 27 (KRR). At Ser-62 the chain carries Phosphoserine. Residue His-104 is part of the active site. The interval 108 to 125 (NHVYAYDAKIEIQTLTGL) is 130's region. Residue Cys-146 is part of the active site. The propeptide occupies 163-175 (HQTDKLDNVTQVD). Ser-239 carries the phosphoserine modification. 2 S-palmitoyl cysteine lipidation sites follow: Cys-246 and Cys-259.

This sequence belongs to the peptidase C14A family. Heterotetramer that consists of two anti-parallel arranged heterodimers, each one formed by a 18 kDa (p18) and a 11 kDa (p11) subunit. Interacts with BIRC6/bruce. Interacts with RIPK3. As to quaternary structure, heterotetramer that consists of two anti-parallel arranged heterodimers, each one formed by a 18 kDa (Caspase-6 subunit p18) and a 11 kDa (Caspase-6 subunit p11) subunit. Phosphorylated by NUAK1; phosphorylation inhibits self-activation. Phosphorylation at Ser-239 by AMP-activated protein kinase (PRKAA1 or PRKAA2) inhibits autocleavage, preventing caspase activation, thereby preventing hepatocyte apoptosis. Post-translationally, palmitoylation by ZDHHC17 blocks dimerization and subsequent activation, leading to inhibit the cysteine protease activity. In terms of processing, can be cleaved and activated by different caspases, depending on the context. Cleaved and activated by caspase-8 (CASP8) and subsequently by caspase-3 (CASP3). Can also undergo autoactivation by mediating autocleavage at Asp-162 and Asp-175, while it is not able to cleave its N-terminal disordered prodomain. Cleaved and activated by CASP1, possibly in the context of inflammation. Highly expressed in lung, liver, kidney, testis, and heart. Lower levels in spleen, skeletal muscle and brain. Expressed in neurons.

The protein localises to the cytoplasm. It is found in the nucleus. It catalyses the reaction Strict requirement for Asp at position P1 and has a preferred cleavage sequence of Val-Glu-His-Asp-|-.. Its activity is regulated as follows. During activation, the N-terminal disordered prodomain is removed by cleavage. Concomitantly, double cleavage gives rise to a large 18-kDa and a small 11-kDa subunit. The two large and two small subunits then assemble to form the active CASP6 complex. Can be cleaved and activated by different caspases, depending on the context. Cleaved and activated by caspase-8 (CASP8) and subsequently by caspase-3 (CASP3). Can also undergo autoactivation by mediating autocleavage at Asp-162 and Asp-175, while it is not able to cleave its N-terminal disordered prodomain. Intramolecular cleavage at Asp-175 is a prerequisite for CASP6 self-activation. Cleaved and activated by CASP1 in neurons, possibly in the context of inflammation. Phosphorylation at Ser-239 inhibits autocleavage, preventing caspase activation. Its function is as follows. Cysteine protease that plays essential roles in programmed cell death, axonal degeneration, development and innate immunity. Acts as a non-canonical executioner caspase during apoptosis: localizes in the nucleus and cleaves the nuclear structural protein NUMA1 and lamin A/LMNA thereby inducing nuclear shrinkage and fragmentation. Lamin-A/LMNA cleavage is required for chromatin condensation and nuclear disassembly during apoptotic execution. Acts as a regulator of liver damage by promoting hepatocyte apoptosis: in absence of phosphorylation by AMP-activated protein kinase (AMPK), catalyzes cleavage of BID, leading to cytochrome c release, thereby participating in nonalcoholic steatohepatitis. Cleaves PARK7/DJ-1 in cells undergoing apoptosis. Involved in intrinsic apoptosis by mediating cleavage of RIPK1. Furthermore, cleaves many transcription factors such as NF-kappa-B and cAMP response element-binding protein/CREBBP. Cleaves phospholipid scramblase proteins XKR4 and XKR9. In addition to apoptosis, involved in different forms of programmed cell death. Plays an essential role in defense against viruses by acting as a central mediator of the ZBP1-mediated pyroptosis, apoptosis, and necroptosis (PANoptosis), independently of its cysteine protease activity. PANoptosis is a unique inflammatory programmed cell death, which provides a molecular scaffold that allows the interactions and activation of machinery required for inflammasome/pyroptosis, apoptosis and necroptosis. Mechanistically, interacts with RIPK3 and enhances the interaction between RIPK3 and ZBP1, leading to ZBP1-mediated inflammasome activation and cell death. Plays an essential role in axon degeneration during axon pruning which is the remodeling of axons during neurogenesis but not apoptosis. Regulates B-cell programs both during early development and after antigen stimulation. (Microbial infection) Proteolytically cleaves the N protein of coronaviruses. The cleavage leads to two fragments and modulates coronavirus replication by regulating IFN signaling. The two fragments produced by the cleavage interact with IRF3 inhibiting its nuclear translocation after activation and reduce the expression of IFNB and IFN-stimulated genes. In Mus musculus (Mouse), this protein is Caspase-6.